Consider the following 66-residue polypeptide: Regulator of G-protein signaling 6 (66 aa).

The 66-residue stretch at 1 to 66 folds into the RGS domain; the sequence is LAVQDLKKQP…EDAQEHIYKL (66 aa).

In terms of assembly, interacts with GNB5. Interacts with RGS7BP, leading to regulate the subcellular location of the heterodimer formed with GNB5. Interacts with GNAI1.

The protein resides in the cytoplasm. It localises to the cytosol. The protein localises to the membrane. It is found in the nucleus. Its subcellular location is the cell membrane. Regulates G protein-coupled receptor signaling cascades. Inhibits signal transduction by increasing the GTPase activity of G protein alpha subunits, thereby driving them into their inactive GDP-bound form. The RGS6/GNB5 dimer enhances GNAO1 GTPase activity. In Rattus norvegicus (Rat), this protein is Regulator of G-protein signaling 6 (Rgs6).